Reading from the N-terminus, the 348-residue chain is Protein pelota homolog (348 aa).

The protein belongs to the eukaryotic release factor 1 family. Pelota subfamily. Monomer. A divalent metal cation is required as a cofactor.

The protein resides in the cytoplasm. In terms of biological role, may function in recognizing stalled ribosomes, interact with stem-loop structures in stalled mRNA molecules, and effect endonucleolytic cleavage of the mRNA. May play a role in the release non-functional ribosomes and degradation of damaged mRNAs. Has endoribonuclease activity. This is Protein pelota homolog from Methanococcus vannielii (strain ATCC 35089 / DSM 1224 / JCM 13029 / OCM 148 / SB).